Here is a 255-residue protein sequence, read N- to C-terminus: uncharacterized protein (255 aa).

The signal sequence occupies residues 1 to 23 (MKRLNKLVLGIIFLFLVISITAG). A lipid anchor (N-palmitoyl cysteine) is attached at cysteine 24. Cysteine 24 carries the S-diacylglycerol cysteine lipid modification.

The protein belongs to the staphylococcal tandem lipoprotein family.

It localises to the cell membrane. This is an uncharacterized protein from Staphylococcus aureus (strain Mu50 / ATCC 700699).